A 284-amino-acid polypeptide reads, in one-letter code: Probable palmitoyltransferase ZDHHC24 (284 aa).

Residues 1–18 (MGQPWAAGSTDGAPAQLP) lie on the Cytoplasmic side of the membrane. The chain crosses the membrane as a helical span at residues 19–39 (LVLTALWAAAVGLELAYVLVL). Topologically, residues 40–52 (GPGPPPLGPLARA) are extracellular. A helical membrane pass occupies residues 53-73 (LQLALAAFQLLNLLGNVGLFL). The Cytoplasmic portion of the chain corresponds to 74-137 (RSDPSIRGVM…GRCVGFGNYR (64 aa)). Residues 94-144 (AYCYQCQSQVPPRSGHCSACRVCILRRDHHCRLLGRCVGFGNYRPFLCLLL) form the DHHC domain. C124 functions as the S-palmitoyl cysteine intermediate in the catalytic mechanism. Residues 138-158 (PFLCLLLHAAGVLLHVSVLLG) traverse the membrane as a helical segment. Over 159-166 (PALSALLR) the chain is Extracellular. A helical membrane pass occupies residues 167–187 (AHTPLHMAALLLLPWLMLLTG). Residues 188-201 (RVSLAQFALAFVTD) lie on the Cytoplasmic side of the membrane. A helical membrane pass occupies residues 202–222 (TCVAGALLCGAGLLFHGMLLL). At 223-284 (RGQTTWEWAR…TTADVGHTAS (62 aa)) the chain is on the extracellular side.

The protein belongs to the DHHC palmitoyltransferase family.

It is found in the membrane. The enzyme catalyses L-cysteinyl-[protein] + hexadecanoyl-CoA = S-hexadecanoyl-L-cysteinyl-[protein] + CoA. Its function is as follows. Probable palmitoyltransferase that could catalyze the addition of palmitate onto various protein substrates. The sequence is that of Probable palmitoyltransferase ZDHHC24 from Homo sapiens (Human).